Here is a 39-residue protein sequence, read N- to C-terminus: Photosystem II reaction center protein J (39 aa).

Residues 9–29 (LWLVATVGGIAVITVLGIFIY) traverse the membrane as a helical segment.

The protein belongs to the PsbJ family. As to quaternary structure, PSII is composed of 1 copy each of membrane proteins PsbA, PsbB, PsbC, PsbD, PsbE, PsbF, PsbH, PsbI, PsbJ, PsbK, PsbL, PsbM, PsbT, PsbX, PsbY, PsbZ, Psb30/Ycf12, at least 3 peripheral proteins of the oxygen-evolving complex and a large number of cofactors. It forms dimeric complexes.

Its subcellular location is the plastid. It localises to the chloroplast thylakoid membrane. Functionally, one of the components of the core complex of photosystem II (PSII). PSII is a light-driven water:plastoquinone oxidoreductase that uses light energy to abstract electrons from H(2)O, generating O(2) and a proton gradient subsequently used for ATP formation. It consists of a core antenna complex that captures photons, and an electron transfer chain that converts photonic excitation into a charge separation. The protein is Photosystem II reaction center protein J of Gracilaria tenuistipitata var. liui (Red alga).